The primary structure comprises 140 residues: Putative pre-16S rRNA nuclease (140 aa).

The protein belongs to the YqgF nuclease family.

It localises to the cytoplasm. In terms of biological role, could be a nuclease involved in processing of the 5'-end of pre-16S rRNA. This is Putative pre-16S rRNA nuclease from Aeromonas hydrophila subsp. hydrophila (strain ATCC 7966 / DSM 30187 / BCRC 13018 / CCUG 14551 / JCM 1027 / KCTC 2358 / NCIMB 9240 / NCTC 8049).